Consider the following 62-residue polypeptide: Small ribosomal subunit protein bS21C (62 aa).

Positions E43–T62 are disordered. Residues S45–T62 show a composition bias toward basic residues.

It belongs to the bacterial ribosomal protein bS21 family.

The sequence is that of Small ribosomal subunit protein bS21C from Trichormus variabilis (strain ATCC 29413 / PCC 7937) (Anabaena variabilis).